A 307-amino-acid polypeptide reads, in one-letter code: Agmatinase (307 aa).

Mn(2+) is bound by residues His128, Asp151, His153, Asp155, Asp232, and Asp234.

Belongs to the arginase family. Agmatinase subfamily. Mn(2+) is required as a cofactor.

It carries out the reaction agmatine + H2O = urea + putrescine. Its pathway is amine and polyamine biosynthesis; putrescine biosynthesis via agmatine pathway; putrescine from agmatine: step 1/1. In terms of biological role, catalyzes the formation of putrescine from agmatine. This is Agmatinase from Neisseria gonorrhoeae (strain ATCC 700825 / FA 1090).